We begin with the raw amino-acid sequence, 402 residues long: S-adenosylmethionine synthase (402 aa).

ATP is bound at residue histidine 15. Aspartate 17 serves as a coordination point for Mg(2+). Glutamate 43 contributes to the K(+) binding site. Glutamate 56 and glutamine 99 together coordinate L-methionine. The flexible loop stretch occupies residues 99-109 (QSPDIAQGVDT). ATP contacts are provided by residues 174–176 (DGK), 247–248 (RF), aspartate 256, 262–263 (RK), alanine 279, and lysine 283. Position 256 (aspartate 256) interacts with L-methionine. Residue lysine 287 participates in L-methionine binding.

It belongs to the AdoMet synthase family. As to quaternary structure, homotetramer; dimer of dimers. Requires Mg(2+) as cofactor. The cofactor is K(+).

Its subcellular location is the cytoplasm. The catalysed reaction is L-methionine + ATP + H2O = S-adenosyl-L-methionine + phosphate + diphosphate. The protein operates within amino-acid biosynthesis; S-adenosyl-L-methionine biosynthesis; S-adenosyl-L-methionine from L-methionine: step 1/1. Catalyzes the formation of S-adenosylmethionine (AdoMet) from methionine and ATP. The overall synthetic reaction is composed of two sequential steps, AdoMet formation and the subsequent tripolyphosphate hydrolysis which occurs prior to release of AdoMet from the enzyme. This is S-adenosylmethionine synthase from Streptomyces coelicolor (strain ATCC BAA-471 / A3(2) / M145).